Consider the following 2684-residue polypeptide: MFGYNSNEEDCGDVAIIGIGLRFSSGDLNESISKPNQLFNSLLDGFNGIVNTSERWSDNYYLNGEINSVSAGLLPLDEWKRFDPIFFGINPSYDNVVTIDPQQRLLLKCVWEALEDSGIDPISLRGTNTSTFIGCSTTDYCSLQKSPFETQNNIFGSSNHSVANRIGYCFDFRGENFTIDSACSSSLNAINCGYNSIKSNKSNVSVVGGVNFILDPNISKSFTQLNILSPTGKCHSFSSDADGYVRSEGVGIVILKKLKDAIKDSNNIYCVIKGSSSNIDGNYDKLNFYSPSKSSQYENMKLAIKSTNGQINESDIDYCEAHGTGTPTGDPIELEGISRLFSHNNNNNNNNKQVLVGSIKSNIGHTEACSGVASLIKCCLMFKNKLFLQNINFKEPNPLINFKEWALKVVTEPIKFNENKTTVMLINNFGVTGSNVCLILSEFKEKRYNNNEYSSDNACEQIDIDSKVIEKKKFLIPLSSNSSTSLDNYKSIIVNNNYDDSNSSTRSFQEFVYNQIKFKSTSLIQKSVIIASDWNEFQDDDNQIKLKNSEGLISNITVEKKKSPLTVMVFCGQSSQYNKMALSLYENEPIFKESVNRFDKELFKYYGYSVLDRLRSVSDKDEISIHLPILAQPANIMIQISLYELYKHWGVSADIIVGHSLGEMSSSYSSGMIDFETLCYLIYHRSLAQNRTTGTGRMLSVNISYDEFIEKYQSKNNKYETLEIACYNSPTSIVIAGKEDLLNEISKEFKSNDIFCAMLGSLSSFHTSSQFMIKDEVCSLVFKSKLPSVPVFSTVTTNLFNDQTPYNANYVWENIYQPVSFTQTISNLYKHIESNDMGNEITFIEVAPHPTLQFYLNQMKSIQSSYFNHGKSVTIYSPLHKKKNDYNEFLKTISLLYVNNNFNINFKSQLTNINNNKIKSNSNSNSNKNNNKIIQFNDNNLPLYQWDDNEYFKLNPFHEKITSEGPPIQNLGNSIDSACSTYQTFIDIKKPPFQWLKGHQVSDKFYYPGMGYVQNLLSIYPNQDITISSLEFKSPLVLTEGNNQCLETTVSLLSKNEFNVKSHYKDQKTNQWILSSLGNFSLFKHNSINSEKLINIQALKDKCNFTTISKQEFYETIKIKTNLTYKGLFQGVKECSIGNNCSLAVVSLNEINNHTISNHSTIGRSLFNAATLDSCLHGSLIVVAQPIVLDRIEGFKLYSSNIPSSSSSSKDDNDCDSNNNNNSNNFIKELYVYTEAKAKTNYQSFSASVKIILPNGRLLMEISMVVCTSVSLVNPRSSIICKPPSNEIYTPWLQPKDSIINKPQQFKHLYSVDEFIAKEEDNQIISTELLLSLFYKHINVRCPTINLESLITLEYNQFKQLYYNNNGSVNENLFKFVFEILKSYSSNNILNHNNSENNNNENSNNESLYYFEQLYIKTTKIIAKQLFPLKDDDSFTDTPQSLFKNVYLDEFYKNFRAVQPLNNLLSEIIIEALKPILNQPIVFRILEAGGGTGSLSLLILEKICKLLNANPNSVIDIEFTWSDVSSSFFTEIKEKFSPFTAHKNFNIIHRVLDLEKPLFDQDLKPSYYDLVVISNVMHVVKKLKPTLDEIHNILTPNGQLLFIEPPYKSIYYDSIMGCFSQWWPSPDSDTELRPDRSCMNQEKWIKLLNETNYRDTIISGNDNLIFLIQTRKPSINEIISKQSSDSSLDQFNSFNKIILFGNNNNNGCSLQNSISSNQELKSKIININNFNEFQTWITNNYDNSDGFGNSKTLIIFLKSIEPINISNFKEITYEYIQINQLILKLELTNNFKHLLLSLDSTTDNYLSSSIIGAARYFVEYPQLDLYILNYDRISLKILNNSSGSSSSSSSSSSSSISGSSGSSYNSSNVSISSCKQQQLSLINYLINANNNIQKEFTINNNKVYYERYTRHSNKIKCNLQSKSFETNKDNLLIQLDSNLEYQLYSKRVEINSKEVEIEIKATGINYKDYLMHIGMVSSDLDLKYGKEYEVENGIGIENPMIGIDFSGIITRLGSDAERNKFKVGDHVCGVASKTSGSHVVIDYNFIYHQPLNYNHSISASIPSIYITSLHSIYGVGNLKSNESILIHSAASGIGISSLDLLKCKKHQGHIFLTVGSKDKEDYLIKNYGSFITAIYSSRNKDYVNEIKNKLIELGEVEQQGVDLILNTLSSEFMDSNFQCLNMSGRIVDLSVTHLTPNDYIVNNLFKYNMGYNNVEMLYFNGKMVRSYLKKIIKMINSNKLELSIPIIEYSNNQFKDAIEYVNQGKHIGKIIVNHNQDEFNRVYNNYQQNNNNNQIIMKHSYDISKLNMGKNILLTGQTGIILEIMKYLIRYSNHSIQNMIILSKSKLKWELELLINQTKFIKDNIIKFHFIQIDIEDSNKVNQVLNQLELNENITNIDSIIHFAFNNDIGDVQDVNMNRLNIAHGAKTIGAINLHNESINRSWKIKQFIIASSVASVLGSDQQCCYISACSVIDSLSKYRHSLGLPSLAINLGTIASTGFISRNNAIETMFKSSFLNLFSPQLVISSLDLFIQNQHQYPNYSLIDFNFEVMLTSPNYHLYKFDYEINIFKKSYQINTNFSSGSGSDNEFIHSTILNKISELLSIDESKVNEDLQLTQYGMDSLVIVQLKNFIDNQLGHNLITIHQLQHNKINQSIDIIKFGYLINKNKFKYKNNNINSPSEENF.

One can recognise a Ketosynthase family 3 (KS3) domain in the interval 11–442; the sequence is CGDVAIIGIG…GSNVCLILSE (432 aa). Residues Cys183, His322, and His365 each act as for beta-ketoacyl synthase activity in the active site. The acyl/malonyl transferases stretch occupies residues 650-683; sequence GVSADIIVGHSLGEMSSSYSSGMIDFETLCYLIY. Ser660 functions as the For acyl/malonyl transferase activity in the catalytic mechanism. Residues 958 to 1087 form an N-terminal hotdog fold region; it reads HEKITSEGPP…GNFSLFKHNS (130 aa). A PKS/mFAS DH domain is found at 958–1276; sequence HEKITSEGPP…CTSVSLVNPR (319 aa). His999 functions as the Proton acceptor; for dehydratase activity in the catalytic mechanism. Residues 1104 to 1276 form a C-terminal hotdog fold region; it reads NFTTISKQEF…CTSVSLVNPR (173 aa). Asp1173 acts as the Proton donor; for dehydratase activity in catalysis. Positions 1202-1221 are disordered; that stretch reads IPSSSSSSKDDNDCDSNNNN. Positions 2585 to 2662 constitute a Carrier domain; the sequence is SDNEFIHSTI…QSIDIIKFGY (78 aa). At Ser2622 the chain carries O-(pantetheine 4'-phosphoryl)serine.

Requires pantetheine 4'-phosphate as cofactor.

Functionally, probable polyketide synthase. The chain is Probable polyketide synthase 27 (pks27) from Dictyostelium discoideum (Social amoeba).